Consider the following 87-residue polypeptide: NAD(P)H-quinone oxidoreductase subunit O (87 aa).

Residues 1–10 (MSEQTGKVDD) are compositionally biased toward basic and acidic residues. Residues 1–23 (MSEQTGKVDDSQSPPKVQKKLRK) form a disordered region.

It belongs to the complex I NdhO subunit family. In terms of assembly, NDH-1 can be composed of about 15 different subunits; different subcomplexes with different compositions have been identified which probably have different functions.

The protein resides in the cellular thylakoid membrane. It carries out the reaction a plastoquinone + NADH + (n+1) H(+)(in) = a plastoquinol + NAD(+) + n H(+)(out). It catalyses the reaction a plastoquinone + NADPH + (n+1) H(+)(in) = a plastoquinol + NADP(+) + n H(+)(out). In terms of biological role, NDH-1 shuttles electrons from an unknown electron donor, via FMN and iron-sulfur (Fe-S) centers, to quinones in the respiratory and/or the photosynthetic chain. The immediate electron acceptor for the enzyme in this species is believed to be plastoquinone. Couples the redox reaction to proton translocation, and thus conserves the redox energy in a proton gradient. Cyanobacterial NDH-1 also plays a role in inorganic carbon-concentration. This is NAD(P)H-quinone oxidoreductase subunit O from Prochlorococcus marinus (strain NATL2A).